Reading from the N-terminus, the 413-residue chain is NADH-quinone oxidoreductase subunit D (413 aa).

It belongs to the complex I 49 kDa subunit family. As to quaternary structure, NDH-1 is composed of 14 different subunits. Subunits NuoB, C, D, E, F, and G constitute the peripheral sector of the complex.

The protein localises to the cell inner membrane. It catalyses the reaction a quinone + NADH + 5 H(+)(in) = a quinol + NAD(+) + 4 H(+)(out). Its function is as follows. NDH-1 shuttles electrons from NADH, via FMN and iron-sulfur (Fe-S) centers, to quinones in the respiratory chain. The immediate electron acceptor for the enzyme in this species is believed to be ubiquinone. Couples the redox reaction to proton translocation (for every two electrons transferred, four hydrogen ions are translocated across the cytoplasmic membrane), and thus conserves the redox energy in a proton gradient. This chain is NADH-quinone oxidoreductase subunit D, found in Rhodobacter capsulatus (Rhodopseudomonas capsulata).